We begin with the raw amino-acid sequence, 99 residues long: Large ribosomal subunit protein uL23 (99 aa).

Contacts protein L29, and trigger factor when it is bound to the ribosome. Part of the 50S ribosomal subunit.

In terms of biological role, one of the early assembly proteins it binds 23S rRNA. One of the proteins that surrounds the polypeptide exit tunnel on the outside of the ribosome. Forms the main docking site for trigger factor binding to the ribosome. The sequence is that of Large ribosomal subunit protein uL23 from Rhodopseudomonas palustris (strain ATCC BAA-98 / CGA009).